A 153-amino-acid chain; its full sequence is UPF0260 protein YcgN (153 aa).

It belongs to the UPF0260 family.

The chain is UPF0260 protein YcgN from Shigella flexneri serotype 5b (strain 8401).